A 505-amino-acid chain; its full sequence is Cell division control protein 6 homolog B (505 aa).

A disordered region spans residues 37–72 (KRKMRSDSAAVSGNSVSTPKKLKSHLPSSVPNPGMS). Polar residues predominate over residues 45 to 54 (AAVSGNSVST).

Belongs to the CDC6/cdc18 family.

It is found in the nucleus. May be involved in the initiation of DNA replication. This Arabidopsis thaliana (Mouse-ear cress) protein is Cell division control protein 6 homolog B.